Consider the following 299-residue polypeptide: uncharacterized protein (299 aa).

The segment at 1–44 (MSDSNLTNPIKAFFHDEFPEQYQEPPGLQKNMKPVPDCGEKSYK) is disordered. 55–79 (LVTGGDSGIGRAAAIAYAREGADVA) contributes to the NADP(+) binding site. Residue Ser-188 coordinates substrate. The Proton acceptor role is filled by Tyr-201.

The protein belongs to the short-chain dehydrogenases/reductases (SDR) family.

This is an uncharacterized protein from Bacillus subtilis (strain 168).